Reading from the N-terminus, the 299-residue chain is Ribosomal RNA small subunit methyltransferase H (299 aa).

S-adenosyl-L-methionine is bound by residues 35–37 (GGH), Asp-54, Tyr-80, Asp-101, and Gln-108.

It belongs to the methyltransferase superfamily. RsmH family.

The protein localises to the cytoplasm. It catalyses the reaction cytidine(1402) in 16S rRNA + S-adenosyl-L-methionine = N(4)-methylcytidine(1402) in 16S rRNA + S-adenosyl-L-homocysteine + H(+). Specifically methylates the N4 position of cytidine in position 1402 (C1402) of 16S rRNA. The polypeptide is Ribosomal RNA small subunit methyltransferase H (Coprothermobacter proteolyticus (strain ATCC 35245 / DSM 5265 / OCM 4 / BT)).